A 353-amino-acid chain; its full sequence is 2-oxoglutarate-dependent dioxygenase phqC (353 aa).

The Fe2OG dioxygenase domain occupies 199–315 (CASELRLNNY…RRSCAFFLKA (117 aa)). His227, Asp229, and His287 together coordinate Fe cation. Arg302 lines the 2-oxoglutarate pocket.

The protein belongs to the iron/ascorbate-dependent oxidoreductase family. It depends on Fe(2+) as a cofactor.

Its pathway is alkaloid biosynthesis. Its function is as follows. 2-oxoglutarate-dependent dioxygenase; part of the gene cluster that mediates the biosynthesis of paraherquamide, a fungal indole alkaloid that belongs to a family of natural products containing a characteristic bicyclo[2.2.2]diazaoctane core. The first steps in the biosynthesis of paraherquamide is the production of the beta-methyl-proline precursor from L-isoleucine. They require oxidation of a terminally hydroxylated L-isoleucine to the corresponding aldehyde by enzymes which have still to be identified. Spontaneous cyclization and dehydration would yield the 4-methyl pyrolline-5-carboxylic acid, which is then reduced by the pyrroline-5-carboxylate reductase phqD leading to the beta-methyl-proline precursor. The next step of paraherquamide biosynthesis involves coupling of beta-methyl-proline and L-tryptophan by the bimodular NRPS phqB, to produce a monooxopiperazine intermediate. The reductase (R) domain of phqB utilizes NADPH for hydride transfer to reduce the thioester bond of the T domain-tethered linear dipeptide to a hemithioaminal intermediate, which spontaneously cleaves the C-S bond to release the aldehyde product. This compound undergoes spontaneous cyclization and dehydration to give a dienamine which is reverse prenylated at C-2 by the reverse prenyltransferase phqJ. The other prenyltransferase present in the cluster, phqI may be a redundant gene in the pathway. During biosynthetic assembly, the key step to produce the polycyclic core is catalyzed by the bifunctional reductase and intramolecular [4+2] Diels-Alderase, phqE, resulting in formation of the [2.2.2] diazaoctane intermediate preparaherquamide. Following formation of preparaherquamide, an indole 2,3-epoxidation-initiated pinacol-like rearrangement is catalyzed by the phqK FAD-dependent monooxygenase. The prenyltransferase phqA, the cytochrome P450 monooxygenase phqL, and the FAD-linked oxidoreductase phqH (or the cytochrome P450 monooxygenase phqM), are proposed to be involved in the formation of the pyran ring. The FAD-dependent monooxygenase phqK is likely responsible for generation of the spiro-oxindole, and the N-methylation is likely mediated by the phqN methyltransferase leading to the isolable natural product paraherquamide F. However, the order of these biosynthetic steps has still to be determined. In late-stage paraherquamide biosynthesis, the third P450 monooxygenase, phqO, is probably responsible for the C-14 hydroxylation, transforming paraherquamide F to paraherquamide G, and paraherquamide E to the final product paraherquamide A. The expansion from the 6-membered ring pyran (in paraherquamides F and G) to the 7-membered dioxepin ring (in paraherquamides A and E) represents a poorly understood but intriguing process that probably involves the 2-oxoglutarate-dependent dioxygenase phqC. Finally, the remaining members of the paraherquamide cluster, including phqI as well as phqM (or phqH), do not have a clearly prescribed role and appear to be redundant. The polypeptide is 2-oxoglutarate-dependent dioxygenase phqC (Penicillium fellutanum).